The sequence spans 212 residues: Imidazole glycerol phosphate synthase subunit HisH (212 aa).

The region spanning 3–212 (DIAIVDYGMG…LGNFVRWKPV (210 aa)) is the Glutamine amidotransferase type-1 domain. The active-site Nucleophile is Cys-82. Catalysis depends on residues His-191 and Glu-193.

Heterodimer of HisH and HisF.

The protein localises to the cytoplasm. It carries out the reaction 5-[(5-phospho-1-deoxy-D-ribulos-1-ylimino)methylamino]-1-(5-phospho-beta-D-ribosyl)imidazole-4-carboxamide + L-glutamine = D-erythro-1-(imidazol-4-yl)glycerol 3-phosphate + 5-amino-1-(5-phospho-beta-D-ribosyl)imidazole-4-carboxamide + L-glutamate + H(+). The enzyme catalyses L-glutamine + H2O = L-glutamate + NH4(+). It functions in the pathway amino-acid biosynthesis; L-histidine biosynthesis; L-histidine from 5-phospho-alpha-D-ribose 1-diphosphate: step 5/9. In terms of biological role, IGPS catalyzes the conversion of PRFAR and glutamine to IGP, AICAR and glutamate. The HisH subunit catalyzes the hydrolysis of glutamine to glutamate and ammonia as part of the synthesis of IGP and AICAR. The resulting ammonia molecule is channeled to the active site of HisF. The polypeptide is Imidazole glycerol phosphate synthase subunit HisH (Nitrosospira multiformis (strain ATCC 25196 / NCIMB 11849 / C 71)).